A 366-amino-acid chain; its full sequence is Spore germination protein GerM (366 aa).

Disordered regions lie at residues 42–72 and 346–366; these read TFVN…KADQ and EKGE…TGSF. Positions 58–69 are enriched in basic and acidic residues; sequence KKTESEKSDTAK. Polar residues predominate over residues 357 to 366; that stretch reads RPSQVNTGSF.

Unknown. Affects both sporulation and germination. The polypeptide is Spore germination protein GerM (gerM) (Bacillus subtilis (strain 168)).